A 426-amino-acid polypeptide reads, in one-letter code: Phosphomethylpyrimidine synthase (426 aa).

Substrate-binding positions include asparagine 65, methionine 94, tyrosine 123, histidine 162, 184–186 (SRG), 225–228 (DGMR), and glutamate 264. Residue histidine 268 participates in Zn(2+) binding. Substrate is bound at residue tyrosine 291. Histidine 332 contributes to the Zn(2+) binding site. Cysteine 408, cysteine 411, and cysteine 415 together coordinate [4Fe-4S] cluster.

This sequence belongs to the ThiC family. The cofactor is [4Fe-4S] cluster.

It catalyses the reaction 5-amino-1-(5-phospho-beta-D-ribosyl)imidazole + S-adenosyl-L-methionine = 4-amino-2-methyl-5-(phosphooxymethyl)pyrimidine + CO + 5'-deoxyadenosine + formate + L-methionine + 3 H(+). It participates in cofactor biosynthesis; thiamine diphosphate biosynthesis. In terms of biological role, catalyzes the synthesis of the hydroxymethylpyrimidine phosphate (HMP-P) moiety of thiamine from aminoimidazole ribotide (AIR) in a radical S-adenosyl-L-methionine (SAM)-dependent reaction. This chain is Phosphomethylpyrimidine synthase, found in Methanococcus maripaludis (strain DSM 14266 / JCM 13030 / NBRC 101832 / S2 / LL).